The primary structure comprises 408 residues: uncharacterized protein (408 aa).

Over residues 376–386 the composition is skewed to polar residues; the sequence is NELNDPNSVYN. A disordered region spans residues 376 to 408; it reads NELNDPNSVYNSPEFDHQGDQKKLTEENGCVVQ. The segment covering 389–401 has biased composition (basic and acidic residues); the sequence is EFDHQGDQKKLTE.

This is an uncharacterized protein from Acanthamoeba polyphaga (Amoeba).